A 343-amino-acid chain; its full sequence is Cytoplasmic tRNA 2-thiolation protein 1 (343 aa).

This sequence belongs to the TtcA family. CTU1/NCS6/ATPBD3 subfamily.

Its subcellular location is the cytoplasm. The protein operates within tRNA modification; 5-methoxycarbonylmethyl-2-thiouridine-tRNA biosynthesis. Functionally, plays a central role in 2-thiolation of mcm(5)S(2)U at tRNA wobble positions of tRNA(Lys), tRNA(Glu) and tRNA(Gln). Directly binds tRNAs and probably acts by catalyzing adenylation of tRNAs, an intermediate required for 2-thiolation. It is unclear whether it acts as a sulfurtransferase that transfers sulfur from thiocarboxylated URM1 onto the uridine of tRNAs at wobble position. The protein is Cytoplasmic tRNA 2-thiolation protein 1 of Drosophila grimshawi (Hawaiian fruit fly).